A 408-amino-acid polypeptide reads, in one-letter code: Succinylornithine transaminase (408 aa).

Lys-252 is modified (N6-(pyridoxal phosphate)lysine).

The protein belongs to the class-III pyridoxal-phosphate-dependent aminotransferase family. AstC subfamily. Pyridoxal 5'-phosphate is required as a cofactor.

The catalysed reaction is N(2)-succinyl-L-ornithine + 2-oxoglutarate = N-succinyl-L-glutamate 5-semialdehyde + L-glutamate. Its pathway is amino-acid degradation; L-arginine degradation via AST pathway; L-glutamate and succinate from L-arginine: step 3/5. Functionally, catalyzes the transamination of N(2)-succinylornithine and alpha-ketoglutarate into N(2)-succinylglutamate semialdehyde and glutamate. Can also act as an acetylornithine aminotransferase. This chain is Succinylornithine transaminase, found in Salmonella choleraesuis (strain SC-B67).